The primary structure comprises 178 residues: Gamma-crystallin S (178 aa).

Position 2 is an N-acetylserine (serine 2). The interval 2-5 is N-terminal arm; the sequence is SKTG. 2 consecutive Beta/gamma crystallin 'Greek key' domains span residues 6–44 and 45–87; these read AKISFYEDRNFQGRRYDCDCDCVDFRSYLSRCNSIRVEG and GTWA…RAVH. Residues 88 to 93 form a connecting peptide region; sequence LSSGGQ. 2 Beta/gamma crystallin 'Greek key' domains span residues 94 to 134 and 135 to 177; these read YKIQ…KVLE and GTWI…RRIV.

This sequence belongs to the beta/gamma-crystallin family. Monomer.

In terms of biological role, crystallins are the dominant structural components of the vertebrate eye lens. The sequence is that of Gamma-crystallin S (Crygs) from Rattus norvegicus (Rat).